We begin with the raw amino-acid sequence, 591 residues long: L-fucose isomerase (591 aa).

Residues Glu-337 and Asp-361 each act as proton acceptor in the active site. Glu-337, Asp-361, and His-528 together coordinate Mn(2+).

Belongs to the L-fucose isomerase family. Homohexamer. Requires Mn(2+) as cofactor.

The protein resides in the cytoplasm. The catalysed reaction is L-fucose = L-fuculose. It functions in the pathway carbohydrate degradation; L-fucose degradation; L-lactaldehyde and glycerone phosphate from L-fucose: step 1/3. Functionally, converts the aldose L-fucose into the corresponding ketose L-fuculose. This Salmonella paratyphi B (strain ATCC BAA-1250 / SPB7) protein is L-fucose isomerase.